The chain runs to 333 residues: tRNA pseudouridine synthase B (333 aa).

Residue D46 is the Nucleophile of the active site.

The protein belongs to the pseudouridine synthase TruB family. Type 1 subfamily.

The enzyme catalyses uridine(55) in tRNA = pseudouridine(55) in tRNA. Its function is as follows. Responsible for synthesis of pseudouridine from uracil-55 in the psi GC loop of transfer RNAs. In Gluconobacter oxydans (strain 621H) (Gluconobacter suboxydans), this protein is tRNA pseudouridine synthase B.